The following is a 112-amino-acid chain: Probable insulin-like peptide beta-type 5 (112 aa).

Positions 1–19 (MNSVFTIIFVLCALQVAAS) are cleaved as a signal peptide. The propeptide at 20–58 (FRQSFGPSMSEESASMQLLRELQHNMMESAHRPMPRARR) is removed; by convertase egl-3. 4 disulfide bridges follow: Cys68/Cys97, Cys80/Cys110, Cys84/Cys111, and Cys96/Cys101.

This sequence belongs to the insulin family. May be processed by serine endoprotease bli-4. As to expression, expressed by ASI and ASJ sensory neurons.

It localises to the secreted. In terms of biological role, probable insulin-like peptide which negatively regulates synapse development at the neuromuscular junctions. Probably acts as a daf-2/InsR agonist ligand to prevent dauer formation under optimal environmental conditions. Acts on AWC sensory neurons to regulate high salt chemotaxis responses. The chain is Probable insulin-like peptide beta-type 5 (ins-6) from Caenorhabditis elegans.